Consider the following 234-residue polypeptide: Small ribosomal subunit protein eS4 (234 aa).

The region spanning 43–106 is the S4 RNA-binding domain; it reads MPIAVWLRDY…NEYYRVLLDE (64 aa).

This sequence belongs to the eukaryotic ribosomal protein eS4 family.

This is Small ribosomal subunit protein eS4 from Nanoarchaeum equitans (strain Kin4-M).